Reading from the N-terminus, the 221-residue chain is Deep sea actinoporin Cjtox II (221 aa).

Positions 1-19 (MNRLIIVCLVAAMIYSTIA) are cleaved as a signal peptide. The propeptide occupies 20 to 42 (LPMKEDISNDERPISVNEEPVKK). Phosphocholine-binding residues include Ser96, Val129, Ser147, Pro149, Tyr175, Tyr179, and Tyr180. A trp-rich region, which is important for the binding to lipid membrane region spans residues 147–162 (SVPYDYNWYENWWNIK). The Cell attachment site, crucial for protein stability signature appears at 186–188 (KGD).

Belongs to the actinoporin family. Sea anemone subfamily. In terms of assembly, octamer or nonamer in membranes. Monomer in the soluble state. In terms of tissue distribution, expressed in actinopharynx and in gastric filaments. Is not expressed in tentacles.

It is found in the secreted. It localises to the nematocyst. The protein resides in the target cell membrane. Functionally, may be involved in digestion of prey. Pore-forming protein that forms cations-selective hydrophilic pores of around 1 nm and causes cytolysis. Pore formation is a multi-step process that involves specific recognition of membrane sphingomyelin (but neither cholesterol nor phosphatidylcholine) using aromatic rich region and adjacent phosphocholine (POC) binding site, firm binding to the membrane (mainly driven by hydrophobic interactions) accompanied by the transfer of the N-terminal region to the lipid-water interface and finally pore formation after oligomerization of monomers. Shows hemolytic activity on equine erythrocytes. Hemolysis is highly inhibited in presence of sphingomyelin, suggesting that this protein targets sphingomyelin. This chain is Deep sea actinoporin Cjtox II, found in Cribrinopsis japonica (Deep-sea anemone).